Consider the following 80-residue polypeptide: Omega-conotoxin-like 2/7 (80 aa).

The signal sequence occupies residues 1 to 22; it reads MKLTCMMIVAVMFLTASIFITA. Residues 23 to 51 constitute a propeptide that is removed on maturation; the sequence is DNSRNGIENLPRMRRHEMKKPKASKLNKR. 3 disulfide bridges follow: cysteine 53–cysteine 71, cysteine 60–cysteine 75, and cysteine 70–cysteine 79.

The protein belongs to the conotoxin O1 superfamily. Expressed by the venom duct.

The protein localises to the secreted. Functionally, omega-conotoxins act at presynaptic membranes, they bind and block voltage-gated calcium channels (Cav). This chain is Omega-conotoxin-like 2/7, found in Conus imperialis (Imperial cone).